A 373-amino-acid polypeptide reads, in one-letter code: Leucine aminopeptidase 1 (373 aa).

The N-terminal stretch at 1–18 (MKLLSVLALSATATSVLG) is a signal peptide. Residue asparagine 136 is glycosylated (N-linked (GlcNAc...) asparagine). Zn(2+) contacts are provided by histidine 176 and aspartate 195. Asparagine 196 carries an N-linked (GlcNAc...) asparagine glycan. Glutamate 234 and aspartate 261 together coordinate Zn(2+). Asparagine 284 carries N-linked (GlcNAc...) asparagine glycosylation. A disulfide bridge connects residues cysteine 310 and cysteine 314. Histidine 343 serves as a coordination point for Zn(2+).

It belongs to the peptidase M28 family. M28E subfamily. As to quaternary structure, monomer. Requires Zn(2+) as cofactor.

The protein localises to the secreted. Functionally, extracellular aminopeptidase which contributes to pathogenicity. The protein is Leucine aminopeptidase 1 (LAP1) of Trichophyton equinum (Horse ringworm fungus).